The primary structure comprises 691 residues: Elongation factor G (691 aa).

The region spanning 8 to 283 (DMQRNIGIMA…AVVDFLPSPV (276 aa)) is the tr-type G domain. Residues 17–24 (AHIDAGKT), 81–85 (DTPGH), and 135–138 (NKMD) each bind GTP.

Belongs to the TRAFAC class translation factor GTPase superfamily. Classic translation factor GTPase family. EF-G/EF-2 subfamily.

Its subcellular location is the cytoplasm. In terms of biological role, catalyzes the GTP-dependent ribosomal translocation step during translation elongation. During this step, the ribosome changes from the pre-translocational (PRE) to the post-translocational (POST) state as the newly formed A-site-bound peptidyl-tRNA and P-site-bound deacylated tRNA move to the P and E sites, respectively. Catalyzes the coordinated movement of the two tRNA molecules, the mRNA and conformational changes in the ribosome. The protein is Elongation factor G of Nitratidesulfovibrio vulgaris (strain ATCC 29579 / DSM 644 / CCUG 34227 / NCIMB 8303 / VKM B-1760 / Hildenborough) (Desulfovibrio vulgaris).